Reading from the N-terminus, the 208-residue chain is FMN-dependent NADH:quinone oxidoreductase 1 (208 aa).

The protein belongs to the azoreductase type 1 family. Homodimer. FMN is required as a cofactor.

The catalysed reaction is 2 a quinone + NADH + H(+) = 2 a 1,4-benzosemiquinone + NAD(+). It catalyses the reaction N,N-dimethyl-1,4-phenylenediamine + anthranilate + 2 NAD(+) = 2-(4-dimethylaminophenyl)diazenylbenzoate + 2 NADH + 2 H(+). Its function is as follows. Quinone reductase that provides resistance to thiol-specific stress caused by electrophilic quinones. Functionally, also exhibits azoreductase activity. Catalyzes the reductive cleavage of the azo bond in aromatic azo compounds to the corresponding amines. The sequence is that of FMN-dependent NADH:quinone oxidoreductase 1 from Bacillus licheniformis (strain ATCC 14580 / DSM 13 / JCM 2505 / CCUG 7422 / NBRC 12200 / NCIMB 9375 / NCTC 10341 / NRRL NRS-1264 / Gibson 46).